The primary structure comprises 83 residues: Cell division topological specificity factor (83 aa).

This sequence belongs to the MinE family.

Prevents the cell division inhibition by proteins MinC and MinD at internal division sites while permitting inhibition at polar sites. This ensures cell division at the proper site by restricting the formation of a division septum at the midpoint of the long axis of the cell. The chain is Cell division topological specificity factor from Buchnera aphidicola subsp. Schizaphis graminum (strain Sg).